The following is a 243-amino-acid chain: Ribosomal RNA small subunit methyltransferase G (243 aa).

S-adenosyl-L-methionine is bound by residues Gly82, Phe87, 133–134 (AE), and Arg152.

Belongs to the methyltransferase superfamily. RNA methyltransferase RsmG family.

The protein resides in the cytoplasm. In terms of biological role, specifically methylates the N7 position of a guanine in 16S rRNA. In Clostridium novyi (strain NT), this protein is Ribosomal RNA small subunit methyltransferase G.